The following is a 319-amino-acid chain: 2-oxoglutarate and iron-dependent oxygenase domain-containing protein 3 (319 aa).

Residues 1–34 are disordered; that stretch reads MAPQRRAATKAPEGNGAAERRNRSSTKKDRAPRE. Residues 1 to 42 are Cytoplasmic-facing; sequence MAPQRRAATKAPEGNGAAERRNRSSTKKDRAPREVQRLWQRP. Residues 18-34 show a composition bias toward basic and acidic residues; that stretch reads AERRNRSSTKKDRAPRE. A helical; Signal-anchor for type II membrane protein membrane pass occupies residues 43-65; the sequence is WLRTAGLGAGFVLTALLLWSSLG. Over 66 to 319 the chain is Lumenal; the sequence is ADDGVAEVLA…DHGIEDPAFP (254 aa). In terms of domain architecture, Fe2OG dioxygenase spans 207–309; it reads KPTFFSRINS…AITIAFSCNP (103 aa). A glycan (N-linked (GlcNAc...) asparagine) is linked at Asn-215. 3 residues coordinate Fe cation: His-230, Asp-232, and His-288. Residue Arg-298 is part of the active site. Residue Arg-298 participates in 2-oxoglutarate binding.

The protein belongs to the OGFOD3 family. Requires Fe(2+) as cofactor. It depends on L-ascorbate as a cofactor.

The protein resides in the membrane. In Homo sapiens (Human), this protein is 2-oxoglutarate and iron-dependent oxygenase domain-containing protein 3 (OGFOD3).